The primary structure comprises 89 residues: MAHKKAGGSSRNGRDSQSKRLGVKKFGGEAVIAGNIIVRQRGTEWHPGSNVGLGKDHTIFALTAGNVNYRTKANGRVYVSVMPKAEAAE.

Residues 1 to 21 are disordered; it reads MAHKKAGGSSRNGRDSQSKRL.

Belongs to the bacterial ribosomal protein bL27 family.

The chain is Large ribosomal subunit protein bL27 from Rhizobium leguminosarum bv. trifolii (strain WSM2304).